The chain runs to 24 residues: RuBisCO large subunit-binding protein subunit beta, chloroplastic (24 aa).

It belongs to the chaperonin (HSP60) family. In terms of assembly, oligomer of probably six alpha and six beta subunits.

The protein localises to the plastid. The protein resides in the chloroplast. In terms of biological role, this protein binds RuBisCO small and large subunits and is implicated in the assembly of the enzyme oligomer. The chain is RuBisCO large subunit-binding protein subunit beta, chloroplastic from Populus euphratica (Euphrates poplar).